Reading from the N-terminus, the 235-residue chain is Rab-like protein 3 (235 aa).

The small GTPase-like stretch occupies residues 1-235 (MASLDRVKVL…GGNFKSLHYD (235 aa)). GTP is bound by residues 16–21 (GVGKSS), 148–150 (KLD), and 179–180 (DC).

Belongs to the small GTPase superfamily. Rab family. As to quaternary structure, homodimer.

Functionally, required for KRAS signaling regulation and modulation of cell proliferation. Regulator of KRAS prenylation, and probably prenylation of other small GTPases. Required for lymphocyte development and function. Not required for myeloid cell development. The chain is Rab-like protein 3 (rabl3) from Xenopus tropicalis (Western clawed frog).